The sequence spans 74 residues: Large ribosomal subunit protein uL29 (74 aa).

Belongs to the universal ribosomal protein uL29 family.

This chain is Large ribosomal subunit protein uL29, found in Streptomyces avermitilis (strain ATCC 31267 / DSM 46492 / JCM 5070 / NBRC 14893 / NCIMB 12804 / NRRL 8165 / MA-4680).